Consider the following 167-residue polypeptide: Mediator of RNA polymerase II transcription subunit 10 (167 aa).

Gly residues predominate over residues 141–158 (TGGRTVGGEGEGAGQGEG). The tract at residues 141–167 (TGGRTVGGEGEGAGQGEGGEGRGEGGN) is disordered.

This sequence belongs to the Mediator complex subunit 10 family. Component of the Mediator complex.

The protein resides in the nucleus. In terms of biological role, component of the Mediator complex, a coactivator involved in the regulated transcription of nearly all RNA polymerase II-dependent genes. Mediator functions as a bridge to convey information from gene-specific regulatory proteins to the basal RNA polymerase II transcription machinery. Mediator is recruited to promoters by direct interactions with regulatory proteins and serves as a scaffold for the assembly of a functional preinitiation complex with RNA polymerase II and the general transcription factors. The protein is Mediator of RNA polymerase II transcription subunit 10 (NUT2) of Chaetomium globosum (strain ATCC 6205 / CBS 148.51 / DSM 1962 / NBRC 6347 / NRRL 1970) (Soil fungus).